The chain runs to 575 residues: V-type ATP synthase alpha chain (575 aa).

ATP is bound at residue 238-245; that stretch reads GPFGAGKT.

Belongs to the ATPase alpha/beta chains family.

It catalyses the reaction ATP + H2O + 4 H(+)(in) = ADP + phosphate + 5 H(+)(out). Functionally, produces ATP from ADP in the presence of a proton gradient across the membrane. The V-type alpha chain is a catalytic subunit. This chain is V-type ATP synthase alpha chain, found in Borreliella afzelii (strain PKo) (Borrelia afzelii).